We begin with the raw amino-acid sequence, 377 residues long: Chaperone protein DnaJ (377 aa).

Residues 5–70 (DYYQVLGVSR…KKRSAYDQLG (66 aa)) form the J domain. The segment at 138–216 (GVTKIISFKT…CYGEGRYINT (79 aa)) adopts a CR-type zinc-finger fold. Residues Cys-151, Cys-154, Cys-168, Cys-171, Cys-190, Cys-193, Cys-204, and Cys-207 each contribute to the Zn(2+) site. CXXCXGXG motif repeat units lie at residues 151–158 (CDACAGKG), 168–175 (CPTCRGSG), 190–197 (CQTCRGAG), and 204–211 (CTKCYGEG).

The protein belongs to the DnaJ family. In terms of assembly, homodimer. Zn(2+) is required as a cofactor.

The protein resides in the cytoplasm. Participates actively in the response to hyperosmotic and heat shock by preventing the aggregation of stress-denatured proteins and by disaggregating proteins, also in an autonomous, DnaK-independent fashion. Unfolded proteins bind initially to DnaJ; upon interaction with the DnaJ-bound protein, DnaK hydrolyzes its bound ATP, resulting in the formation of a stable complex. GrpE releases ADP from DnaK; ATP binding to DnaK triggers the release of the substrate protein, thus completing the reaction cycle. Several rounds of ATP-dependent interactions between DnaJ, DnaK and GrpE are required for fully efficient folding. Also involved, together with DnaK and GrpE, in the DNA replication of plasmids through activation of initiation proteins. In Orientia tsutsugamushi (strain Boryong) (Rickettsia tsutsugamushi), this protein is Chaperone protein DnaJ.